A 232-amino-acid polypeptide reads, in one-letter code: Rho-related GTP-binding protein Rho6 (232 aa).

Residues Q23–A28, Y38–T45, D67–S71, C125–D128, and A169–F170 each bind GTP. The short motif at Y42–Y50 is the Effector region element. Residue C229 is modified to Cysteine methyl ester. C229 carries S-geranylgeranyl cysteine lipidation. The propeptide at S230–M232 is removed in mature form.

It belongs to the small GTPase superfamily. Rho family. Binds GRB7 and PLXNB1. Interacts with PLXNA2. Interacts with UBXD5.

The protein localises to the cell membrane. Its subcellular location is the cytoplasm. The protein resides in the cytoskeleton. Functionally, lacks intrinsic GTPase activity. Has a low affinity for GDP, and constitutively binds GTP. Controls rearrangements of the actin cytoskeleton. Induces the Rac-dependent neuritic process formation in part by disruption of the cortical actin filaments. Causes the formation of many neuritic processes from the cell body with disruption of the cortical actin filaments. The chain is Rho-related GTP-binding protein Rho6 (RND1) from Bos taurus (Bovine).